The following is a 470-amino-acid chain: ATP synthase subunit beta (470 aa).

Residue 148–155 participates in ATP binding; that stretch reads GGAGVGKT.

This sequence belongs to the ATPase alpha/beta chains family. As to quaternary structure, F-type ATPases have 2 components, CF(1) - the catalytic core - and CF(0) - the membrane proton channel. CF(1) has five subunits: alpha(3), beta(3), gamma(1), delta(1), epsilon(1). CF(0) has three main subunits: a(1), b(2) and c(9-12). The alpha and beta chains form an alternating ring which encloses part of the gamma chain. CF(1) is attached to CF(0) by a central stalk formed by the gamma and epsilon chains, while a peripheral stalk is formed by the delta and b chains.

The protein resides in the cell inner membrane. The catalysed reaction is ATP + H2O + 4 H(+)(in) = ADP + phosphate + 5 H(+)(out). In terms of biological role, produces ATP from ADP in the presence of a proton gradient across the membrane. The catalytic sites are hosted primarily by the beta subunits. The protein is ATP synthase subunit beta of Teredinibacter turnerae (strain ATCC 39867 / T7901).